The following is a 286-amino-acid chain: Oxidase hkm6 (286 aa).

Residues His-16, His-25, and His-215 each coordinate Cu cation.

The protein belongs to the tyrosinase family. The cofactor is Cu(2+).

Its pathway is secondary metabolite biosynthesis. Functionally, oxidase; part of the gene cluster that mediates the biosynthesis of hancockiamides, an unusual new family of N-cinnamoylated piperazines. The NRPS hkm10 and the NmrA-like reductase hkm9 are proposed to convert two molecules of L-Phe to the intermediary piperazine called xenocockiamide A. Xenocockiamide A is then converted to hancockiamide D via a series of hydroxylations and O-methylations. The tyrosinase hkm6 may catalyze an aromatic hydroxylation, then the 2-oxoglutarate-dependent Fe(II) dioxygenase hkm4 and the FAD-dependent phenol hydroxylase hkm7 may catalyze consecutive hydroxylations to install 2 more hydroxy groups, and the methyltransferase hkm8 probably catalyzes two methylations using 2 molecules of S-adenosyl-L-methionine (SAM). The NRPS hkm11 activates and transfers trans-cinnamate supplied by the PAL hkm12 to hancockiamide D and produces hancockiamide A. NRPS Hkm11 has the flexibility to tolerate the bulky hancockiamide G as a substrate and the absence of the acetyl-transferase hkm3 opens up the opportunity for hkm11 to introduce a second N-cinnamoyl moiety. The cytochrome P450 monooxygenase hkm5 catalyzes the methylenedioxy bridge formation, converting hancockiamide A into hancockiamide G. Hkm5 can also convert hancockiamide B into hancockiamide C, and hancockiamide D into hancockiamide H. The N-acetyltransferase hkm3 finally transfers an acetyl group to 1-N of piperazine, converting hancockiamide A into hancockiamide B and hancockiamide G into hancockiamide C. This Aspergillus hancockii protein is Oxidase hkm6.